The following is a 149-amino-acid chain: Probable glycine cleavage system H protein 2 (149 aa).

One can recognise a Lipoyl-binding domain in the interval 32-114 (IAVVGITDLA…YGQGWIAKIK (83 aa)). K73 carries the N6-lipoyllysine modification.

It belongs to the GcvH family. In terms of assembly, the glycine cleavage system is composed of four proteins: P, T, L and H. (R)-lipoate serves as cofactor.

Its function is as follows. The glycine cleavage system catalyzes the degradation of glycine. The H protein shuttles the methylamine group of glycine from the P protein to the T protein. The polypeptide is Probable glycine cleavage system H protein 2 (Sulfolobus acidocaldarius (strain ATCC 33909 / DSM 639 / JCM 8929 / NBRC 15157 / NCIMB 11770)).